A 300-amino-acid chain; its full sequence is GTPase Era (300 aa).

Residues 5–176 (HSGFVCLVGR…IDVLAAALPA (172 aa)) enclose the Era-type G domain. Positions 13–20 (GRPNTGKS) are G1. 13–20 (GRPNTGKS) lines the GTP pocket. The tract at residues 39–43 (QTTRH) is G2. Residues 60-63 (DTPG) are G3. Residues 60-64 (DTPGL) and 125-128 (TKID) each bind GTP. The interval 125–128 (TKID) is G4. A G5 region spans residues 155-157 (VSA). In terms of domain architecture, KH type-2 spans 207 to 286 (VRDELPHSLA…YLDLRVKVAK (80 aa)).

This sequence belongs to the TRAFAC class TrmE-Era-EngA-EngB-Septin-like GTPase superfamily. Era GTPase family. In terms of assembly, monomer.

It localises to the cell envelope. Its subcellular location is the secreted. It is found in the cell wall. Exhibits GTPase activity. Binds RNA but is probably not involved in ribosome assembly in mycobacteria. This is GTPase Era from Mycobacterium bovis (strain ATCC BAA-935 / AF2122/97).